The chain runs to 212 residues: Lipid A acyltransferase PagP (212 aa).

The signal sequence occupies residues 1–24; the sequence is MYLKRTLITLSLITLPIVPFLSYA. Positions 36-47 are enriched in polar residues; it reads NLAPVTVDSSDP. The disordered stretch occupies residues 36–56; it reads NLAPVTVDSSDPVSDKQGESW. Active-site residues include histidine 84, aspartate 127, and serine 128.

Belongs to the lipid A palmitoyltransferase family. As to quaternary structure, homodimer.

Its subcellular location is the cell outer membrane. It catalyses the reaction a lipid A + a 1,2-diacyl-sn-glycero-3-phosphocholine = a hepta-acyl lipid A + a 2-acyl-sn-glycero-3-phosphocholine. It carries out the reaction a lipid IVA + a 1,2-diacyl-sn-glycero-3-phosphocholine = a lipid IVB + a 2-acyl-sn-glycero-3-phosphocholine. The catalysed reaction is a lipid IIA + a 1,2-diacyl-sn-glycero-3-phosphocholine = a lipid IIB + a 2-acyl-sn-glycero-3-phosphocholine. Its function is as follows. Transfers a fatty acid residue from the sn-1 position of a phospholipid to the N-linked hydroxyfatty acid chain on the proximal unit of lipid A or its precursors. The polypeptide is Lipid A acyltransferase PagP (Pectobacterium carotovorum subsp. carotovorum (strain PC1)).